The primary structure comprises 277 residues: Urease accessory protein UreD (277 aa).

It belongs to the UreD family. As to quaternary structure, ureD, UreF and UreG form a complex that acts as a GTP-hydrolysis-dependent molecular chaperone, activating the urease apoprotein by helping to assemble the nickel containing metallocenter of UreC. The UreE protein probably delivers the nickel.

The protein resides in the cytoplasm. In terms of biological role, required for maturation of urease via the functional incorporation of the urease nickel metallocenter. In Flavobacterium johnsoniae (strain ATCC 17061 / DSM 2064 / JCM 8514 / BCRC 14874 / CCUG 350202 / NBRC 14942 / NCIMB 11054 / UW101) (Cytophaga johnsonae), this protein is Urease accessory protein UreD.